We begin with the raw amino-acid sequence, 349 residues long: Phosphoribosylformylglycinamidine cyclo-ligase (349 aa).

The protein belongs to the AIR synthase family.

The protein resides in the cytoplasm. The enzyme catalyses 2-formamido-N(1)-(5-O-phospho-beta-D-ribosyl)acetamidine + ATP = 5-amino-1-(5-phospho-beta-D-ribosyl)imidazole + ADP + phosphate + H(+). It functions in the pathway purine metabolism; IMP biosynthesis via de novo pathway; 5-amino-1-(5-phospho-D-ribosyl)imidazole from N(2)-formyl-N(1)-(5-phospho-D-ribosyl)glycinamide: step 2/2. The sequence is that of Phosphoribosylformylglycinamidine cyclo-ligase from Bordetella pertussis (strain Tohama I / ATCC BAA-589 / NCTC 13251).